The primary structure comprises 237 residues: Oil body-associated protein 2C (237 aa).

This sequence belongs to the OBAP family.

This is Oil body-associated protein 2C from Arabidopsis thaliana (Mouse-ear cress).